The sequence spans 151 residues: Deoxyuridine 5'-triphosphate nucleotidohydrolase (151 aa).

Substrate is bound by residues arginine 69–glycine 71, asparagine 82, leucine 86–aspartate 88, and methionine 96.

The protein belongs to the dUTPase family. Mg(2+) is required as a cofactor.

The catalysed reaction is dUTP + H2O = dUMP + diphosphate + H(+). The protein operates within pyrimidine metabolism; dUMP biosynthesis; dUMP from dCTP (dUTP route): step 2/2. In terms of biological role, this enzyme is involved in nucleotide metabolism: it produces dUMP, the immediate precursor of thymidine nucleotides and it decreases the intracellular concentration of dUTP so that uracil cannot be incorporated into DNA. This Blochmanniella floridana protein is Deoxyuridine 5'-triphosphate nucleotidohydrolase.